Here is a 332-residue protein sequence, read N- to C-terminus: CXADR-like membrane protein (332 aa).

The first 19 residues, 1–19 (MHTLIRSFLGLWYVLGALA), serve as a signal peptide directing secretion. Ig-like C2-type domains are found at residues 20 to 123 (QTEI…SFIT) and 130 to 220 (PSEL…VDVT). At 20-231 (QTEIKLVADE…QSVSNTGILA (212 aa)) the chain is on the extracellular side. Cystine bridges form between Cys-35-Cys-109 and Cys-151-Cys-204. N-linked (GlcNAc...) asparagine glycosylation is present at Asn-193. Residues 232-252 (GVACGVVVGVFLIFFTVWLLF) traverse the membrane as a helical segment. Residues 253-332 (HKKEFKKREE…EQRHHCLEKI (80 aa)) are Cytoplasmic-facing. Residues 276–332 (PKARLVKPGSSSSDSRSSQSGSSSTRSTTNSASRSQRTHSTQETPHGEQRHHCLEKI) are disordered. The segment covering 285-310 (SSSSDSRSSQSGSSSTRSTTNSASRS) has biased composition (low complexity). Over residues 320-332 (PHGEQRHHCLEKI) the composition is skewed to basic and acidic residues.

It localises to the cell junction. The protein localises to the tight junction. It is found in the cell membrane. This chain is CXADR-like membrane protein (clmp), found in Xenopus tropicalis (Western clawed frog).